Reading from the N-terminus, the 160-residue chain is NADH-quinone oxidoreductase subunit I (160 aa).

2 4Fe-4S ferredoxin-type domains span residues 51–81 (LRRYDDGEERCIACKLCEAICPAQAITIEAA) and 91–120 (VRYDIDMTKCIYCGFCQEACPVDAIVEGPN). [4Fe-4S] cluster contacts are provided by Cys-61, Cys-64, Cys-67, Cys-71, Cys-100, Cys-103, Cys-106, and Cys-110.

The protein belongs to the complex I 23 kDa subunit family. NDH-1 is composed of 14 different subunits. Subunits NuoA, H, J, K, L, M, N constitute the membrane sector of the complex. Requires [4Fe-4S] cluster as cofactor.

Its subcellular location is the cell inner membrane. It carries out the reaction a quinone + NADH + 5 H(+)(in) = a quinol + NAD(+) + 4 H(+)(out). Its function is as follows. NDH-1 shuttles electrons from NADH, via FMN and iron-sulfur (Fe-S) centers, to quinones in the respiratory chain. The immediate electron acceptor for the enzyme in this species is believed to be ubiquinone. Couples the redox reaction to proton translocation (for every two electrons transferred, four hydrogen ions are translocated across the cytoplasmic membrane), and thus conserves the redox energy in a proton gradient. The protein is NADH-quinone oxidoreductase subunit I of Anaplasma marginale (strain St. Maries).